Reading from the N-terminus, the 949-residue chain is Glycine dehydrogenase (decarboxylating) (949 aa).

At Lys-702 the chain carries N6-(pyridoxal phosphate)lysine.

This sequence belongs to the GcvP family. The glycine cleavage system is composed of four proteins: P, T, L and H. Pyridoxal 5'-phosphate serves as cofactor.

The catalysed reaction is N(6)-[(R)-lipoyl]-L-lysyl-[glycine-cleavage complex H protein] + glycine + H(+) = N(6)-[(R)-S(8)-aminomethyldihydrolipoyl]-L-lysyl-[glycine-cleavage complex H protein] + CO2. Its function is as follows. The glycine cleavage system catalyzes the degradation of glycine. The P protein binds the alpha-amino group of glycine through its pyridoxal phosphate cofactor; CO(2) is released and the remaining methylamine moiety is then transferred to the lipoamide cofactor of the H protein. This Rhodococcoides fascians (Rhodococcus fascians) protein is Glycine dehydrogenase (decarboxylating).